Reading from the N-terminus, the 1012-residue chain is DNA polymerase catalytic subunit (1012 aa).

It belongs to the DNA polymerase type-B family.

Its subcellular location is the host nucleus. The catalysed reaction is DNA(n) + a 2'-deoxyribonucleoside 5'-triphosphate = DNA(n+1) + diphosphate. In terms of biological role, replicates viral genomic DNA. This is DNA polymerase catalytic subunit (U38) from Human herpesvirus 6B (strain Z29) (HHV-6 variant B).